The chain runs to 181 residues: Photosystem I assembly protein Ycf4 (181 aa).

2 helical membrane passes run 19–39 (YFWA…GISS) and 61–81 (IVMM…MATL).

The protein belongs to the Ycf4 family.

It localises to the plastid. It is found in the chloroplast thylakoid membrane. In terms of biological role, seems to be required for the assembly of the photosystem I complex. The polypeptide is Photosystem I assembly protein Ycf4 (Thalassiosira pseudonana (Marine diatom)).